Reading from the N-terminus, the 309-residue chain is NADH-cytochrome b5 reductase 1 (309 aa).

The helical transmembrane segment at 31–51 threads the bilayer; sequence DWVVYSVALALALGTWKFFQL. One can recognise an FAD-binding FR-type domain in the interval 60–168; it reads TKFQEFELKE…RGPKGAFVYQ (109 aa). Residues 148 to 163 and 174 to 208 each bind FAD; these read AGLS…GPKG and HFGM…QVDL.

The protein belongs to the flavoprotein pyridine nucleotide cytochrome reductase family. Monomer. Component of the 2-(3-amino-3-carboxypropyl)histidine synthase complex composed of DPH1, DPH2, DPH3 and a NADH-dependent reductase, predominantly CBR1. The cofactor is FAD.

It is found in the mitochondrion outer membrane. It catalyses the reaction 2 Fe(III)-[cytochrome b5] + NADH = 2 Fe(II)-[cytochrome b5] + NAD(+) + H(+). The enzyme catalyses 2 Fe(3+)-[Dph3] + NADH = 2 Fe(2+)-[Dph3] + NAD(+) + H(+). The protein operates within protein modification; peptidyl-diphthamide biosynthesis. Its function is as follows. NADH-dependent reductase for DPH3 and cytochrome b5. Required for the first step of diphthamide biosynthesis, a post-translational modification of histidine which occurs in elongation factor 2. DPH1 and DPH2 transfer a 3-amino-3-carboxypropyl (ACP) group from S-adenosyl-L-methionine (SAM) to a histidine residue, the reaction is assisted by a reduction system comprising DPH3 and a NADH-dependent reductase, predominantly CBR1. By reducing DPH3, also involved in the formation of the tRNA wobble base modification mcm5s 2U (5-methoxycarbonylmethyl-2-thiouridine), mediated by the elongator complex. The cytochrome b5/NADH cytochrome b5 reductase electron transfer system supports the catalytic activity of several sterol biosynthetic enzymes. In Pyricularia oryzae (strain 70-15 / ATCC MYA-4617 / FGSC 8958) (Rice blast fungus), this protein is NADH-cytochrome b5 reductase 1 (CBR1).